A 383-amino-acid chain; its full sequence is Acetylornithine deacetylase (383 aa).

H80 contributes to the Zn(2+) binding site. D82 is an active-site residue. Position 112 (D112) interacts with Zn(2+). E144 is an active-site residue. Positions 145, 169, and 355 each coordinate Zn(2+).

It belongs to the peptidase M20A family. ArgE subfamily. Homodimer. Requires Zn(2+) as cofactor. Co(2+) is required as a cofactor. Glutathione serves as cofactor.

Its subcellular location is the cytoplasm. It carries out the reaction N(2)-acetyl-L-ornithine + H2O = L-ornithine + acetate. It functions in the pathway amino-acid biosynthesis; L-arginine biosynthesis; L-ornithine from N(2)-acetyl-L-ornithine (linear): step 1/1. Functionally, catalyzes the hydrolysis of the amide bond of N(2)-acetylated L-amino acids. Cleaves the acetyl group from N-acetyl-L-ornithine to form L-ornithine, an intermediate in L-arginine biosynthesis pathway, and a branchpoint in the synthesis of polyamines. This chain is Acetylornithine deacetylase, found in Escherichia coli (strain K12 / MC4100 / BW2952).